A 351-amino-acid polypeptide reads, in one-letter code: Uroporphyrinogen decarboxylase (351 aa).

Substrate contacts are provided by residues 25 to 29 (RQAGR), Asp74, Tyr151, Ser206, and His325.

It belongs to the uroporphyrinogen decarboxylase family. As to quaternary structure, homodimer.

It is found in the cytoplasm. It catalyses the reaction uroporphyrinogen III + 4 H(+) = coproporphyrinogen III + 4 CO2. It functions in the pathway porphyrin-containing compound metabolism; protoporphyrin-IX biosynthesis; coproporphyrinogen-III from 5-aminolevulinate: step 4/4. Its function is as follows. Catalyzes the decarboxylation of four acetate groups of uroporphyrinogen-III to yield coproporphyrinogen-III. This chain is Uroporphyrinogen decarboxylase, found in Chlorobaculum parvum (strain DSM 263 / NCIMB 8327) (Chlorobium vibrioforme subsp. thiosulfatophilum).